Here is a 232-residue protein sequence, read N- to C-terminus: Ribonuclease 3 (232 aa).

Residues 7-135 form the RNase III domain; it reads IQAVESKLKF…ILGAVYLDGG (129 aa). Residue E48 coordinates Mg(2+). D52 is a catalytic residue. 2 residues coordinate Mg(2+): N121 and E124. E124 is a catalytic residue. Positions 160–229 constitute a DRBM domain; the sequence is NPKNRLQQFT…AKQALSTHDD (70 aa).

It belongs to the ribonuclease III family. Homodimer. It depends on Mg(2+) as a cofactor.

It is found in the cytoplasm. It carries out the reaction Endonucleolytic cleavage to 5'-phosphomonoester.. Its function is as follows. Digests double-stranded RNA. Involved in the processing of primary rRNA transcript to yield the immediate precursors to the large and small rRNAs (23S and 16S). Processes some mRNAs, and tRNAs when they are encoded in the rRNA operon. Processes pre-crRNA and tracrRNA of type II CRISPR loci if present in the organism. This Chlamydia muridarum (strain MoPn / Nigg) protein is Ribonuclease 3.